Consider the following 470-residue polypeptide: MRKKRKGSETEGWENLPDDLSCSTASRSSNFRSHFSLEGYARLKKRCKETEAVESVGSFKRRIAGVATAPPCGASSLVSSGRGLKRKIGCIDVSTQTGRKNKIDDDYVFGRNIGKGKFGSVRICKSRKNGTEFACKTLKKGEETVHREVEIMQHLSGHPRVVTLHAVYEESDCFHLVMELCSGGRLIDQMVKVGRYSEQRAANIFKDLMLVINYCHEMGVVHRDIKPENILLTAAGKIQLADFGLAMRIAKGQTLSGLAGSPAYVAPEVLSENYSEKVDVWSAGVLLYALLSGVLPFKGDSLDAIFEAIKNVKLDFNTGVWESVSKPARDLLARMLTREESARITADEVLRHPWILFYTDRTLKTMCIKSKHKSQAGSSTCLQNRSPTEKTDLNRADREKKIPSDSPTDSFSNTEEEEDESGVVDVLVVAIANVRISEPKRSRVCSPTNNPIEQQHSSNLTSTSTLCRAF.

A Protein kinase domain is found at 107–355 (YVFGRNIGKG…ADEVLRHPWI (249 aa)). ATP contacts are provided by residues 113-121 (IGKGKFGSV) and lysine 136. Aspartate 224 serves as the catalytic Proton acceptor. The span at 377–386 (GSSTCLQNRS) shows a compositional bias: polar residues. 2 disordered regions span residues 377–419 (GSST…EEED) and 441–464 (RSRV…TSTS). The span at 387–403 (PTEKTDLNRADREKKIP) shows a compositional bias: basic and acidic residues. Polar residues predominate over residues 445–464 (CSPTNNPIEQQHSSNLTSTS).

The protein belongs to the protein kinase superfamily. Ser/Thr protein kinase family.

It carries out the reaction L-seryl-[protein] + ATP = O-phospho-L-seryl-[protein] + ADP + H(+). The enzyme catalyses L-threonyl-[protein] + ATP = O-phospho-L-threonyl-[protein] + ADP + H(+). The protein is Serine/threonine-protein kinase PEPKR2 (PEPKR2) of Arabidopsis thaliana (Mouse-ear cress).